Reading from the N-terminus, the 109-residue chain is Nascent polypeptide-associated complex protein (109 aa).

An NAC-A/B domain is found at 3-70 (PMNPKQMKKM…YEVVKRPPKI (68 aa)).

This sequence belongs to the NAC-alpha family. As to quaternary structure, homodimer. Interacts with the ribosome. Binds ribosomal RNA.

Functionally, contacts the emerging nascent chain on the ribosome. The chain is Nascent polypeptide-associated complex protein from Archaeoglobus fulgidus (strain ATCC 49558 / DSM 4304 / JCM 9628 / NBRC 100126 / VC-16).